A 156-amino-acid polypeptide reads, in one-letter code: Ribosomal RNA large subunit methyltransferase H (156 aa).

Residues leucine 73, glycine 104, and 123-128 (IGPLTL) contribute to the S-adenosyl-L-methionine site.

The protein belongs to the RNA methyltransferase RlmH family. As to quaternary structure, homodimer.

It is found in the cytoplasm. It carries out the reaction pseudouridine(1915) in 23S rRNA + S-adenosyl-L-methionine = N(3)-methylpseudouridine(1915) in 23S rRNA + S-adenosyl-L-homocysteine + H(+). Specifically methylates the pseudouridine at position 1915 (m3Psi1915) in 23S rRNA. This Xanthomonas campestris pv. campestris (strain 8004) protein is Ribosomal RNA large subunit methyltransferase H.